The primary structure comprises 581 residues: Mitosis inhibitor protein kinase mik1 (581 aa).

Disordered stretches follow at residues Gly43–Met71 and Asn148–Pro178. The span at Lys59–Met71 shows a compositional bias: polar residues. Positions Pro160–Leu169 are enriched in basic residues. A Protein kinase domain is found at Phe289–Ile561. Residues Ile295–Val303 and Lys320 each bind ATP. The Proton acceptor role is filled by Asp417. Asn422 and Asp435 together coordinate Mg(2+).

It belongs to the protein kinase superfamily. Ser/Thr protein kinase family. WEE1 subfamily.

The enzyme catalyses L-seryl-[protein] + ATP = O-phospho-L-seryl-[protein] + ADP + H(+). It carries out the reaction L-threonyl-[protein] + ATP = O-phospho-L-threonyl-[protein] + ADP + H(+). Its function is as follows. Protein kinase that acts both on serines and on tyrosines. It acts as a negative regulator of entry into mitosis (G2 to M transition). Phosphorylates and inhibits cdc2. The protein is Mitosis inhibitor protein kinase mik1 (mik1) of Schizosaccharomyces pombe (strain 972 / ATCC 24843) (Fission yeast).